Consider the following 243-residue polypeptide: Isoprenyl transferase 2 (243 aa).

The active site involves Asp23. A Mg(2+)-binding site is contributed by Asp23. Substrate contacts are provided by residues 24 to 27 (GNGR), Trp28, Arg36, His40, and 68 to 70 (STE). The Proton acceptor role is filled by Asn71. Residues Trp72, Arg74, Arg191, and 197 to 199 (RTS) contribute to the substrate site. Glu210 provides a ligand contact to Mg(2+).

Belongs to the UPP synthase family. Homodimer. Mg(2+) is required as a cofactor.

Catalyzes the condensation of isopentenyl diphosphate (IPP) with allylic pyrophosphates generating different type of terpenoids. This Corynebacterium efficiens (strain DSM 44549 / YS-314 / AJ 12310 / JCM 11189 / NBRC 100395) protein is Isoprenyl transferase 2.